The following is a 201-amino-acid chain: IMP cyclohydrolase (201 aa).

This sequence belongs to the archaeal IMP cyclohydrolase family.

It carries out the reaction IMP + H2O = 5-formamido-1-(5-phospho-D-ribosyl)imidazole-4-carboxamide. Its pathway is purine metabolism; IMP biosynthesis via de novo pathway; IMP from 5-formamido-1-(5-phospho-D-ribosyl)imidazole-4-carboxamide: step 1/1. Catalyzes the cyclization of 5-formylamidoimidazole-4-carboxamide ribonucleotide to IMP. The chain is IMP cyclohydrolase from Methanococcus maripaludis (strain C5 / ATCC BAA-1333).